A 293-amino-acid chain; its full sequence is 2-pyrone-4,6-dicarboxylate hydrolase (293 aa).

The interval 1 to 20 (MTNDERILSWNETPSKPRYT) is disordered. Substrate contacts are provided by residues 29–31 (HCH), tyrosine 47, serine 75, arginine 122, arginine 128, tyrosine 154, and histidine 178. The active-site Proton acceptor is aspartate 246. Residue asparagine 251 coordinates substrate.

Belongs to the metallo-dependent hydrolases superfamily. PDC hydrolase family. As to quaternary structure, monomer.

The enzyme catalyses 2-oxo-2H-pyran-4,6-dicarboxylate + H2O = (1E)-4-oxobut-1-ene-1,2,4-tricarboxylate + H(+). The protein operates within secondary metabolite metabolism; lignin degradation. Strongly inhibited by 1 mM Zn(2+) ions. Also inhibited by pyridine-2,4-dicarboxylic acid, 5-hydroxyisophthalic acid and 5,5'-dithiobis(2-nitrobenzoic acid) (Ellman reagent). In terms of biological role, contributes to the degradation of lignin at the level of the protocatechuate 4,5-cleavage pathway. Catalyzes the hydrolysis of 2-pyrone-4,6-dicarboxylate (PDC) to (4E)-oxalomesaconate (OMA). The keto form of OMA can tautomerize into the enol form, 4-carboxy-2-hydroxymuconate (CHM), under certain pH conditions. Also catalyzes the reverse reaction. Is essential for the growth of Sphingobium sp. SYK-6 on vanillate but is not responsible for the growth of this strain on syringate. The polypeptide is 2-pyrone-4,6-dicarboxylate hydrolase (Sphingobium sp. (strain NBRC 103272 / SYK-6)).